Reading from the N-terminus, the 79-residue chain is Conotoxin Vi6.1 (79 aa).

An N-terminal signal peptide occupies residues 1 to 22; sequence MKLTCVLIITVLFLTASQLITA. Residues 23-47 constitute a propeptide that is removed on maturation; that stretch reads DYSRDQRQYRAVRLGDEMRNFKGAR. 3 disulfide bridges follow: cysteine 49-cysteine 62, cysteine 56-cysteine 67, and cysteine 61-cysteine 77. A 4-hydroxyproline mark is found at proline 60 and proline 63.

Expressed by the venom duct.

The protein localises to the secreted. Its function is as follows. Ion channel inhibitor that inhibits the increase in intracellular calcium upon depolarization in DRG neurons. In vivo, both intraperitoneal and intracranial injections into mice induce hyperactivity. The sequence is that of Conotoxin Vi6.1 from Conus virgo (Virgin cone).